The chain runs to 250 residues: NADH-quinone oxidoreductase subunit C (250 aa).

Residues 193 to 250 form a disordered region; the sequence is GMTPPLPGDEKADMPPIDDPMVTEGPEDTGAGARANAKAAEGTPADPPAMDDEEEDDA. The span at 222-236 shows a compositional bias: low complexity; it reads GAGARANAKAAEGTP. Over residues 241-250 the composition is skewed to acidic residues; it reads AMDDEEEDDA.

It belongs to the complex I 30 kDa subunit family. In terms of assembly, NDH-1 is composed of 14 different subunits. Subunits NuoB, C, D, E, F, and G constitute the peripheral sector of the complex.

It localises to the cell inner membrane. The catalysed reaction is a quinone + NADH + 5 H(+)(in) = a quinol + NAD(+) + 4 H(+)(out). Functionally, NDH-1 shuttles electrons from NADH, via FMN and iron-sulfur (Fe-S) centers, to quinones in the respiratory chain. The immediate electron acceptor for the enzyme in this species is believed to be ubiquinone. Couples the redox reaction to proton translocation (for every two electrons transferred, four hydrogen ions are translocated across the cytoplasmic membrane), and thus conserves the redox energy in a proton gradient. In Erythrobacter litoralis (strain HTCC2594), this protein is NADH-quinone oxidoreductase subunit C.